A 506-amino-acid chain; its full sequence is 2-isopropylmalate synthase (506 aa).

Residues 4–266 (ILFMDTTLRD…EPSMTLKEIK (263 aa)) form the Pyruvate carboxyltransferase domain. Mn(2+) is bound by residues D13, H201, H203, and N237. The interval 390–506 (NITQLQVHFV…KLKSFIQLVK (117 aa)) is regulatory domain.

The protein belongs to the alpha-IPM synthase/homocitrate synthase family. LeuA type 1 subfamily. Homodimer. It depends on Mn(2+) as a cofactor.

It localises to the cytoplasm. The enzyme catalyses 3-methyl-2-oxobutanoate + acetyl-CoA + H2O = (2S)-2-isopropylmalate + CoA + H(+). It functions in the pathway amino-acid biosynthesis; L-leucine biosynthesis; L-leucine from 3-methyl-2-oxobutanoate: step 1/4. Functionally, catalyzes the condensation of the acetyl group of acetyl-CoA with 3-methyl-2-oxobutanoate (2-ketoisovalerate) to form 3-carboxy-3-hydroxy-4-methylpentanoate (2-isopropylmalate). This is 2-isopropylmalate synthase from Bacillus cereus (strain AH820).